Consider the following 295-residue polypeptide: 33 kDa chaperonin (295 aa).

2 cysteine pairs are disulfide-bonded: Cys-237/Cys-239 and Cys-270/Cys-273.

This sequence belongs to the HSP33 family. In terms of processing, under oxidizing conditions two disulfide bonds are formed involving the reactive cysteines. Under reducing conditions zinc is bound to the reactive cysteines and the protein is inactive.

It localises to the cytoplasm. Functionally, redox regulated molecular chaperone. Protects both thermally unfolding and oxidatively damaged proteins from irreversible aggregation. Plays an important role in the bacterial defense system toward oxidative stress. This Lactiplantibacillus plantarum (strain ATCC BAA-793 / NCIMB 8826 / WCFS1) (Lactobacillus plantarum) protein is 33 kDa chaperonin.